A 617-amino-acid polypeptide reads, in one-letter code: Dihydroxy-acid dehydratase (617 aa).

Aspartate 81 provides a ligand contact to Mg(2+). Cysteine 122 lines the [2Fe-2S] cluster pocket. Mg(2+) is bound by residues aspartate 123 and lysine 124. The residue at position 124 (lysine 124) is an N6-carboxylysine. Residue cysteine 195 participates in [2Fe-2S] cluster binding. Mg(2+) is bound at residue glutamate 491. Catalysis depends on serine 517, which acts as the Proton acceptor.

The protein belongs to the IlvD/Edd family. As to quaternary structure, homodimer. The cofactor is [2Fe-2S] cluster. Mg(2+) is required as a cofactor.

The catalysed reaction is (2R)-2,3-dihydroxy-3-methylbutanoate = 3-methyl-2-oxobutanoate + H2O. It catalyses the reaction (2R,3R)-2,3-dihydroxy-3-methylpentanoate = (S)-3-methyl-2-oxopentanoate + H2O. The protein operates within amino-acid biosynthesis; L-isoleucine biosynthesis; L-isoleucine from 2-oxobutanoate: step 3/4. It participates in amino-acid biosynthesis; L-valine biosynthesis; L-valine from pyruvate: step 3/4. Functionally, functions in the biosynthesis of branched-chain amino acids. Catalyzes the dehydration of (2R,3R)-2,3-dihydroxy-3-methylpentanoate (2,3-dihydroxy-3-methylvalerate) into 2-oxo-3-methylpentanoate (2-oxo-3-methylvalerate) and of (2R)-2,3-dihydroxy-3-methylbutanoate (2,3-dihydroxyisovalerate) into 2-oxo-3-methylbutanoate (2-oxoisovalerate), the penultimate precursor to L-isoleucine and L-valine, respectively. This chain is Dihydroxy-acid dehydratase, found in Rhodospirillum rubrum (strain ATCC 11170 / ATH 1.1.1 / DSM 467 / LMG 4362 / NCIMB 8255 / S1).